The chain runs to 362 residues: Probable endopolygalacturonase II (362 aa).

The first 20 residues, 1–20, serve as a signal peptide directing secretion; the sequence is MHSFASLLAYGLAAGATLAS. Residues 21–27 constitute a propeptide that is removed on maturation; it reads ASPIEAR. Cysteines 30 and 45 form a disulfide. Residues 156 to 186 form a PbH1 1 repeat; sequence SDDITLTDITINNADGDSLGGHNTDAFDVGN. The Proton donor role is filled by aspartate 201. Cysteine 203 and cysteine 219 are joined by a disulfide. PbH1 repeat units lie at residues 209–229, 238–259, 267–289, and 301–322; these read GENI…SIGS, VKNV…RIKT, VSEI…VIQQ, and TNGV…DSKA. Histidine 223 is a catalytic residue. Residue asparagine 240 is glycosylated (N-linked (GlcNAc...) asparagine). 2 disulfide bridges follow: cysteine 329/cysteine 334 and cysteine 353/cysteine 362.

This sequence belongs to the glycosyl hydrolase 28 family.

It localises to the secreted. The enzyme catalyses (1,4-alpha-D-galacturonosyl)n+m + H2O = (1,4-alpha-D-galacturonosyl)n + (1,4-alpha-D-galacturonosyl)m.. In terms of biological role, involved in maceration and soft-rotting of plant tissue. Hydrolyzes the 1,4-alpha glycosidic bonds of de-esterified pectate in the smooth region of the plant cell wall. The sequence is that of Probable endopolygalacturonase II (pgaII) from Aspergillus kawachii (strain NBRC 4308) (White koji mold).